A 164-amino-acid chain; its full sequence is UBA-like domain-containing protein 2 (164 aa).

Residue S2 is modified to N-acetylserine. The interval 144–164 (PPGASQGGAPQKAMAAMDGQR) is disordered.

The protein belongs to the UBALD family.

The sequence is that of UBA-like domain-containing protein 2 (Ubald2) from Mus musculus (Mouse).